A 434-amino-acid chain; its full sequence is Pre-B-cell leukemia transcription factor 3 (434 aa).

A disordered region spans residues 20–41 (SVQGGMALPPPPHGHEGADGDG). Residues 32 to 41 (HGHEGADGDG) show a composition bias toward basic and acidic residues. The PBC domain maps to 41-234 (GRKQDIGDIL…VMILRSRFLD (194 aa)). A PBC-A region spans residues 48-127 (DILHQIMTIT…EGVSGPEKGG (80 aa)). The segment at 130-234 (AAAAAAAAAS…VMILRSRFLD (105 aa)) is PBC-B. A DNA-binding region (homeobox; TALE-type) is located at residues 235–297 (ARRKRRNFSK…NKRIRYKKNI (63 aa)). Residues 326–341 (NQTNSPTTPNSGSSGS) show a composition bias toward low complexity. 2 disordered regions span residues 326-349 (NQTN…NSGD) and 405-434 (ANGG…DTSN). Over residues 405–422 (ANGGWQDATTPSSVTSPT) the composition is skewed to polar residues.

The protein belongs to the TALE/PBX homeobox family. As to quaternary structure, interacts with PBXIP1.

It localises to the nucleus. Its function is as follows. Transcriptional activator that binds the sequence 5'-ATCAATCAA-3'. The protein is Pre-B-cell leukemia transcription factor 3 (Pbx3) of Mus musculus (Mouse).